The sequence spans 130 residues: UPF0713 protein YngL (130 aa).

Helical transmembrane passes span leucine 4–phenylalanine 25, methionine 62–leucine 84, and isoleucine 89–glycine 111.

Belongs to the UPF0713 family.

It is found in the cell membrane. The polypeptide is UPF0713 protein YngL (yngL) (Bacillus subtilis (strain 168)).